Consider the following 307-residue polypeptide: 2-dehydropantoate 2-reductase (307 aa).

Residues 7–12 (GSGAMG), asparagine 102, and alanine 128 each bind NADP(+). Residue asparagine 102 participates in substrate binding. Catalysis depends on lysine 184, which acts as the Proton donor. Asparagine 188, asparagine 192, and serine 255 together coordinate substrate. Glutamate 268 provides a ligand contact to NADP(+).

This sequence belongs to the ketopantoate reductase family.

The protein localises to the cytoplasm. It carries out the reaction (R)-pantoate + NADP(+) = 2-dehydropantoate + NADPH + H(+). It functions in the pathway cofactor biosynthesis; (R)-pantothenate biosynthesis; (R)-pantoate from 3-methyl-2-oxobutanoate: step 2/2. Catalyzes the NADPH-dependent reduction of ketopantoate into pantoic acid. This is 2-dehydropantoate 2-reductase (apbA) from Streptococcus pyogenes serotype M18 (strain MGAS8232).